A 497-amino-acid polypeptide reads, in one-letter code: Putative BTB/POZ domain-containing protein R738 (497 aa).

One can recognise a BTB domain in the interval 16 to 86 (SDCKLVLDDG…FYEKSNVINA (71 aa)).

This sequence belongs to the mimivirus BTB/WD family.

The sequence is that of Putative BTB/POZ domain-containing protein R738 from Acanthamoeba polyphaga (Amoeba).